The chain runs to 556 residues: Formate--tetrahydrofolate ligase (556 aa).

65–72 is an ATP binding site; the sequence is TPAGEGKS.

The protein belongs to the formate--tetrahydrofolate ligase family.

It catalyses the reaction (6S)-5,6,7,8-tetrahydrofolate + formate + ATP = (6R)-10-formyltetrahydrofolate + ADP + phosphate. Its pathway is one-carbon metabolism; tetrahydrofolate interconversion. In Streptococcus suis (strain 98HAH33), this protein is Formate--tetrahydrofolate ligase.